Here is a 278-residue protein sequence, read N- to C-terminus: 4-deoxy-L-threo-5-hexosulose-uronate ketol-isomerase (278 aa).

His-196, His-198, Glu-203, and His-245 together coordinate Zn(2+).

The protein belongs to the KduI family. In terms of assembly, homohexamer. Requires Zn(2+) as cofactor.

It carries out the reaction 5-dehydro-4-deoxy-D-glucuronate = 3-deoxy-D-glycero-2,5-hexodiulosonate. It participates in glycan metabolism; pectin degradation; 2-dehydro-3-deoxy-D-gluconate from pectin: step 4/5. Its function is as follows. Catalyzes the isomerization of 5-dehydro-4-deoxy-D-glucuronate to 3-deoxy-D-glycero-2,5-hexodiulosonate. The sequence is that of 4-deoxy-L-threo-5-hexosulose-uronate ketol-isomerase from Escherichia coli (strain 55989 / EAEC).